The primary structure comprises 162 residues: Tegument protein BLRF2 (162 aa).

Positions 12–43 (VKAVDMSMEDMAARLARLESENKALKQQVLRG) form a coiled coil. The interval 118-162 (SMLGAKGQPSPGEGTRPRESNDPNATRRARSRSRGREAKKVQISD) is disordered. Positions 151–162 (RGREAKKVQISD) are enriched in basic and acidic residues.

This sequence belongs to the herpesviridae BLRF2 family. As to quaternary structure, homooligomer; homooligomerizes and binds double-stranded DNA (dsDNA) cooperatively. Interacts with host CGAS.

The protein resides in the virion tegument. It localises to the host cytoplasm. Plays a role in the inhibition of host innate immune system by targeting the CGAS enzymatic activity which is the principal cytosolic DNA sensor that detects invading viral DNA. Acts by inhibiting CGAS-DNA phase separation: directly binds double-stranded DNA (dsDNA) in a length dependent but sequence independent manner and is able to form DNA-induced phase separation in infected cells. DNA phase separation of ORF52 mediates disruption of liquid-like droplets in which CGAS is activated, thereby preventing CGAS activity. The polypeptide is Tegument protein BLRF2 (Homo sapiens (Human)).